The following is a 341-amino-acid chain: Eukaryotic translation initiation factor 3 subunit I (341 aa).

WD repeat units lie at residues glycine 8–histidine 49, glycine 50–glutamate 91, cysteine 145–serine 184, aspartate 189–threonine 228, and glycine 286–methionine 325.

It belongs to the eIF-3 subunit I family. As to quaternary structure, component of the eukaryotic translation initiation factor 3 (eIF-3) complex.

Its subcellular location is the cytoplasm. Functionally, component of the eukaryotic translation initiation factor 3 (eIF-3) complex, which is involved in protein synthesis of a specialized repertoire of mRNAs and, together with other initiation factors, stimulates binding of mRNA and methionyl-tRNAi to the 40S ribosome. The eIF-3 complex specifically targets and initiates translation of a subset of mRNAs involved in cell proliferation. The protein is Eukaryotic translation initiation factor 3 subunit I of Pyricularia oryzae (strain 70-15 / ATCC MYA-4617 / FGSC 8958) (Rice blast fungus).